Here is a 223-residue protein sequence, read N- to C-terminus: Putative thymidylate synthase (223 aa).

Residue Cys-146 is part of the active site.

This sequence belongs to the thymidylate synthase family. Archaeal-type ThyA subfamily. As to quaternary structure, monomer.

Its subcellular location is the cytoplasm. Its pathway is pyrimidine metabolism; dTTP biosynthesis. Its function is as follows. May catalyze the biosynthesis of dTMP using an unknown cosubstrate. In vitro, also catalyzes the dehalogenation of 5-bromo-deoxyuridine monophosphate (Br-dUMP) and the tritium exchange of [5-3H]deoxyuridine monophosphate ([5-3H]dUMP). This chain is Putative thymidylate synthase (thyA), found in Methanothermobacter marburgensis (strain ATCC BAA-927 / DSM 2133 / JCM 14651 / NBRC 100331 / OCM 82 / Marburg) (Methanobacterium thermoautotrophicum).